The chain runs to 263 residues: Fructose-bisphosphate aldolase class 1 (263 aa).

The active-site Schiff-base intermediate with dihydroxyacetone-P is Lys-177.

Belongs to the DeoC/FbaB aldolase family.

It carries out the reaction beta-D-fructose 1,6-bisphosphate = D-glyceraldehyde 3-phosphate + dihydroxyacetone phosphate. Functionally, has aldolase activity with fructose 1,6-bisphosphate. May play a role in the biosynthesis of aromatic amino acids (AroAA). This chain is Fructose-bisphosphate aldolase class 1 (fba1), found in Halobacterium salinarum (strain ATCC 29341 / DSM 671 / R1).